We begin with the raw amino-acid sequence, 1157 residues long: ATP-dependent helicase/deoxyribonuclease subunit B (1157 aa).

One can recognise a UvrD-like helicase ATP-binding domain in the interval 1–299 (MSIRFIIGRA…SHLEKYFFVR (299 aa)). ATP is bound at residue 8-15 (GRAGAGKT). Residues 279–590 (GNTARFKSPA…LVASLERSRN (312 aa)) enclose the UvrD-like helicase C-terminal domain. Residues Cys792, Cys1112, Cys1115, and Cys1121 each coordinate [4Fe-4S] cluster.

This sequence belongs to the helicase family. AddB/RexB type 1 subfamily. As to quaternary structure, heterodimer of AddA and AddB. Mg(2+) is required as a cofactor. The cofactor is [4Fe-4S] cluster.

Its function is as follows. The heterodimer acts as both an ATP-dependent DNA helicase and an ATP-dependent, dual-direction single-stranded exonuclease. Recognizes the chi site generating a DNA molecule suitable for the initiation of homologous recombination. The AddB subunit has 5' -&gt; 3' nuclease activity but not helicase activity. This chain is ATP-dependent helicase/deoxyribonuclease subunit B, found in Pelotomaculum thermopropionicum (strain DSM 13744 / JCM 10971 / SI).